Reading from the N-terminus, the 462-residue chain is Proteases secretion protein PrtF (462 aa).

The N-terminal stretch at 1-23 is a signal peptide; it reads MRRKAVLLTVVLSLSGGSAQAMG.

The protein belongs to the outer membrane factor (OMF) (TC 1.B.17) family.

It localises to the cell outer membrane. Its function is as follows. Involved in the secretion of proteases A, B, C and G. The protein is Proteases secretion protein PrtF (prtF) of Dickeya chrysanthemi (Pectobacterium chrysanthemi).